We begin with the raw amino-acid sequence, 422 residues long: Testin (422 aa).

The PET domain occupies 92–199 (MILTNPVPAK…GDVKLPGELE (108 aa)). The interval 198-224 (LETKATDKNNVNSGDRSTSAAVGAMED) is disordered. Polar residues predominate over residues 205 to 217 (KNNVNSGDRSTSA). 3 consecutive LIM zinc-binding domains span residues 234–297 (YSCY…CDSE), 299–359 (PRCA…KHAA), and 362–422 (QGCH…KMMS).

It belongs to the prickle / espinas / testin family.

The protein resides in the cytoplasm. It is found in the cell junction. The protein localises to the focal adhesion. In terms of biological role, scaffold protein that may play a role in cell adhesion, cell spreading and in the reorganization of the actin cytoskeleton. May play a role in the regulation of cell proliferation. May inhibit cell growth. In Gallus gallus (Chicken), this protein is Testin (TES).